The chain runs to 102 residues: uncharacterized protein (102 aa).

The tract at residues 1 to 21 is disordered; it reads MAESVNENNNNAGDSNGSGRT. An N-linked (GlcNAc...) asparagine glycan is attached at Asn-16. The chain crosses the membrane as a helical span at residues 24 to 44; that stretch reads NTIVTIVVVVIVVTLIIILAT. Residues 49–102 form a disordered region; sequence IGGSGKKVGAEEPATKLSSKSDDRNGGPNKKSPAKGSSKDDNNTEESVQSNLYG. Over residues 56–73 the composition is skewed to basic and acidic residues; it reads VGAEEPATKLSSKSDDRN. Asn-90 carries an N-linked (GlcNAc...) asparagine glycan. Polar residues predominate over residues 93–102; it reads EESVQSNLYG.

It is found in the membrane. This is an uncharacterized protein from Encephalitozoon cuniculi (strain GB-M1) (Microsporidian parasite).